The chain runs to 241 residues: 7-cyano-7-deazaguanine synthase (241 aa).

Position 9-19 (9-19 (LSGGLDSSTVL)) interacts with ATP. Positions 189, 197, 200, and 203 each coordinate Zn(2+).

Belongs to the QueC family. The cofactor is Zn(2+).

It catalyses the reaction 7-carboxy-7-deazaguanine + NH4(+) + ATP = 7-cyano-7-deazaguanine + ADP + phosphate + H2O + H(+). It participates in purine metabolism; 7-cyano-7-deazaguanine biosynthesis. Catalyzes the ATP-dependent conversion of 7-carboxy-7-deazaguanine (CDG) to 7-cyano-7-deazaguanine (preQ(0)). This Thermoplasma volcanium (strain ATCC 51530 / DSM 4299 / JCM 9571 / NBRC 15438 / GSS1) protein is 7-cyano-7-deazaguanine synthase.